A 306-amino-acid polypeptide reads, in one-letter code: tRNA dimethylallyltransferase (306 aa).

Residue glycine 12–serine 19 coordinates ATP.

This sequence belongs to the IPP transferase family. As to quaternary structure, monomer. Requires Mg(2+) as cofactor.

The enzyme catalyses adenosine(37) in tRNA + dimethylallyl diphosphate = N(6)-dimethylallyladenosine(37) in tRNA + diphosphate. Catalyzes the transfer of a dimethylallyl group onto the adenine at position 37 in tRNAs that read codons beginning with uridine, leading to the formation of N6-(dimethylallyl)adenosine (i(6)A). This chain is tRNA dimethylallyltransferase, found in Mycoplasmoides gallisepticum (strain R(low / passage 15 / clone 2)) (Mycoplasma gallisepticum).